The sequence spans 184 residues: Crossover junction endodeoxyribonuclease RuvC (184 aa).

Residues Asp-11, Glu-73, and Asp-147 contribute to the active site. 3 residues coordinate Mg(2+): Asp-11, Glu-73, and Asp-147.

Belongs to the RuvC family. Homodimer which binds Holliday junction (HJ) DNA. The HJ becomes 2-fold symmetrical on binding to RuvC with unstacked arms; it has a different conformation from HJ DNA in complex with RuvA. In the full resolvosome a probable DNA-RuvA(4)-RuvB(12)-RuvC(2) complex forms which resolves the HJ. It depends on Mg(2+) as a cofactor.

The protein localises to the cytoplasm. It catalyses the reaction Endonucleolytic cleavage at a junction such as a reciprocal single-stranded crossover between two homologous DNA duplexes (Holliday junction).. Functionally, the RuvA-RuvB-RuvC complex processes Holliday junction (HJ) DNA during genetic recombination and DNA repair. Endonuclease that resolves HJ intermediates. Cleaves cruciform DNA by making single-stranded nicks across the HJ at symmetrical positions within the homologous arms, yielding a 5'-phosphate and a 3'-hydroxyl group; requires a central core of homology in the junction. The consensus cleavage sequence is 5'-(A/T)TT(C/G)-3'. Cleavage occurs on the 3'-side of the TT dinucleotide at the point of strand exchange. HJ branch migration catalyzed by RuvA-RuvB allows RuvC to scan DNA until it finds its consensus sequence, where it cleaves and resolves the cruciform DNA. The protein is Crossover junction endodeoxyribonuclease RuvC of Neisseria gonorrhoeae (strain ATCC 700825 / FA 1090).